We begin with the raw amino-acid sequence, 213 residues long: 3-demethoxyubiquinol 3-hydroxylase (213 aa).

Residues E62, E92, H95, E144, E176, and H179 each contribute to the Fe cation site.

This sequence belongs to the COQ7 family. The cofactor is Fe cation.

It localises to the cell membrane. It carries out the reaction a 5-methoxy-2-methyl-3-(all-trans-polyprenyl)benzene-1,4-diol + AH2 + O2 = a 3-demethylubiquinol + A + H2O. It participates in cofactor biosynthesis; ubiquinone biosynthesis. In terms of biological role, catalyzes the hydroxylation of 2-nonaprenyl-3-methyl-6-methoxy-1,4-benzoquinol during ubiquinone biosynthesis. This is 3-demethoxyubiquinol 3-hydroxylase from Psychrobacter sp. (strain PRwf-1).